Here is a 1048-residue protein sequence, read N- to C-terminus: Selenate reductase subunit A (1048 aa).

A signal peptide (tat-type signal) is located at residues 1–39 (MENQHQKFISRRNFIKTSALLGGTAFLGTGLPNIKKTYS). The 4Fe-4S Mo/W bis-MGD-type domain maps to 56 to 129 (ENILYSACLQ…AGIQHAYDPY (74 aa)). [4Fe-4S] cluster-binding residues include cysteine 63, cysteine 66, cysteine 70, and cysteine 115. Residue cysteine 270 coordinates Mo-bis(molybdopterin guanine dinucleotide).

This sequence belongs to the prokaryotic molybdopterin-containing oxidoreductase family. In terms of assembly, the complex is composed of three subunits: SrdA, SrdB and SrdC. Requires [4Fe-4S] cluster as cofactor. The cofactor is Mo-bis(molybdopterin guanine dinucleotide). Post-translationally, predicted to be exported by the Tat system. The position of the signal peptide cleavage has not been experimentally proven.

The protein localises to the secreted. The enzyme catalyses selenite + a quinone + H2O = selenate + a quinol. In terms of biological role, component of the respiratory selenate reductase complex, which catalyzes the reduction of selenate to selenite. SrdA is probably the catalytic subunit that reduces selenate. This chain is Selenate reductase subunit A, found in Mesobacillus selenatarsenatis (strain DSM 18680 / JCM 14380 / FERM P-15431 / SF-1).